A 498-amino-acid chain; its full sequence is ATP synthase subunit beta, chloroplastic (498 aa).

Position 172–179 (172–179 (GGAGVGKT)) interacts with ATP.

This sequence belongs to the ATPase alpha/beta chains family. F-type ATPases have 2 components, CF(1) - the catalytic core - and CF(0) - the membrane proton channel. CF(1) has five subunits: alpha(3), beta(3), gamma(1), delta(1), epsilon(1). CF(0) has four main subunits: a(1), b(1), b'(1) and c(9-12).

The protein resides in the plastid. The protein localises to the chloroplast thylakoid membrane. The catalysed reaction is ATP + H2O + 4 H(+)(in) = ADP + phosphate + 5 H(+)(out). Functionally, produces ATP from ADP in the presence of a proton gradient across the membrane. The catalytic sites are hosted primarily by the beta subunits. The sequence is that of ATP synthase subunit beta, chloroplastic from Helianthus annuus (Common sunflower).